Here is a 122-residue protein sequence, read N- to C-terminus: Acidic phospholipase A2 4 (122 aa).

7 cysteine pairs are disulfide-bonded: Cys26/Cys115, Cys28/Cys44, Cys43/Cys95, Cys49/Cys122, Cys50/Cys88, Cys57/Cys81, and Cys75/Cys86. Ca(2+) contacts are provided by Phe27, Gly29, and Gly31. Residue His47 is part of the active site. Asp48 contributes to the Ca(2+) binding site. The active site involves Asp89.

This sequence belongs to the phospholipase A2 family. Group II subfamily. D49 sub-subfamily. Ca(2+) is required as a cofactor. Expressed by the venom gland.

Its subcellular location is the secreted. The enzyme catalyses a 1,2-diacyl-sn-glycero-3-phosphocholine + H2O = a 1-acyl-sn-glycero-3-phosphocholine + a fatty acid + H(+). Functionally, snake venom phospholipase A2 (PLA2) that has high lipolytic activity. PLA2 catalyzes the calcium-dependent hydrolysis of the 2-acyl groups in 3-sn-phosphoglycerides. This Craspedocephalus gramineus (Bamboo pit viper) protein is Acidic phospholipase A2 4.